Reading from the N-terminus, the 669-residue chain is Cell surface receptor daf-1 (669 aa).

The signal sequence occupies residues 1 to 19; the sequence is MRIRHVVFCLLALVYGAET. Residues 20–170 are Extracellular-facing; sequence SDDDLDERTN…APGPQQSSTW (151 aa). N-linked (GlcNAc...) asparagine glycans are attached at residues asparagine 49, asparagine 79, asparagine 133, and asparagine 154. A helical membrane pass occupies residues 171–191; sequence LILTILALLTFIVLLGIAIFL. At 192 to 669 the chain is on the cytoplasmic side; it reads TRKSWEAKFD…NDDSSRPLLG (478 aa). Residues 262-292 enclose the GS domain; it reads NNMKDMLDVLEETSGSGMGPTTLHKLTIGGQ. In terms of domain architecture, Protein kinase spans 293–593; sequence IRLTGRVGSG…KRMDERQQLL (301 aa). ATP is bound by residues 299-307 and lysine 320; that span reads VGSGRFGNV. Aspartate 423 serves as the catalytic Proton acceptor. Basic and acidic residues-rich tracts occupy residues 611-624 and 633-650; these read DRKI…KDES and VQKE…RETA. The segment at 611-669 is disordered; the sequence is DRKILGPQKPKDESPANGAPRIVQKEIDREDEQENWRETAKTPNGHISSNDDSSRPLLG. Positions 651-661 are enriched in polar residues; that stretch reads KTPNGHISSND.

This sequence belongs to the protein kinase superfamily. TKL Ser/Thr protein kinase family. TGFB receptor subfamily. May interact with daf-4 to regulate dauer larva development. As to expression, head and ventral nerve cord from embryos to adults. Expressed in many sensory neurons. Subset of head neurons show coexpression with daf-4 when dauer/nondauer decision is made. Also expressed in non-neuronal cells: membraneous sheath surrounding the distal end of the intestine and in the distal tip cell of the gonad.

It is found in the membrane. It catalyses the reaction L-threonyl-[receptor-protein] + ATP = O-phospho-L-threonyl-[receptor-protein] + ADP + H(+). It carries out the reaction L-seryl-[receptor-protein] + ATP = O-phospho-L-seryl-[receptor-protein] + ADP + H(+). Its function is as follows. Probably involved in a TGF-beta pathway. May be a receptor for TGF-beta-like ligand daf-7. Controls the decision of whether or not larvae enter a developmentally arrested state, known as dauer, in response to environmental conditions. Involved in regulating entry into quiescence triggered by satiety. Involved in sensitivity to CO2 levels. In AWC neurons, acts to promote expression of srsx-3, a member of the GPCR family. The polypeptide is Cell surface receptor daf-1 (daf-1) (Caenorhabditis elegans).